A 204-amino-acid chain; its full sequence is Probable peptidyl-tRNA hydrolase (204 aa).

Histidine 36 serves as the catalytic Proton acceptor. TRNA contacts are provided by asparagine 86 and asparagine 132.

This sequence belongs to the PTH family.

The catalysed reaction is an N-acyl-L-alpha-aminoacyl-tRNA + H2O = an N-acyl-L-amino acid + a tRNA + H(+). Functionally, peptidyl-tRNA hydrolase that cleaves nascent chains-tRNAs that are not stably fixed in the P-site of 60S ribosome-nascent chain complexes. Acts downstream of the ribosome-associated quality control (RQC) pathway to release non-ubiquitinated nascent chains from 60S and 80S ribosome-nascent chain complexes. Does not act on ubiquitinated nascent chains, which are cleaved by ANKZF1 for degradation. This chain is Probable peptidyl-tRNA hydrolase, found in Mus musculus (Mouse).